We begin with the raw amino-acid sequence, 258 residues long: Tetratricopeptide repeat protein 33 (258 aa).

TPR repeat units follow at residues 59–92, 93–126, and 127–160; these read SKRL…TPGD, AALY…NPHF, and VEAW…CPAN. The tract at residues 231–258 is disordered; that stretch reads SASGSENLSDRKEDKVETNDSKEFIKAR. Basic and acidic residues predominate over residues 238-258; it reads LSDRKEDKVETNDSKEFIKAR.

The chain is Tetratricopeptide repeat protein 33 (ttc33) from Xenopus laevis (African clawed frog).